We begin with the raw amino-acid sequence, 365 residues long: Phosphoserine aminotransferase (365 aa).

Arginine 42 contributes to the L-glutamate binding site. Pyridoxal 5'-phosphate contacts are provided by residues 76–77 (AR), tryptophan 103, threonine 154, aspartate 175, and glutamine 198. Lysine 199 is modified (N6-(pyridoxal phosphate)lysine). 242 to 243 (NT) contributes to the pyridoxal 5'-phosphate binding site.

Belongs to the class-V pyridoxal-phosphate-dependent aminotransferase family. SerC subfamily. As to quaternary structure, homodimer. It depends on pyridoxal 5'-phosphate as a cofactor.

Its subcellular location is the cytoplasm. It catalyses the reaction O-phospho-L-serine + 2-oxoglutarate = 3-phosphooxypyruvate + L-glutamate. The catalysed reaction is 4-(phosphooxy)-L-threonine + 2-oxoglutarate = (R)-3-hydroxy-2-oxo-4-phosphooxybutanoate + L-glutamate. The protein operates within amino-acid biosynthesis; L-serine biosynthesis; L-serine from 3-phospho-D-glycerate: step 2/3. It functions in the pathway cofactor biosynthesis; pyridoxine 5'-phosphate biosynthesis; pyridoxine 5'-phosphate from D-erythrose 4-phosphate: step 3/5. Catalyzes the reversible conversion of 3-phosphohydroxypyruvate to phosphoserine and of 3-hydroxy-2-oxo-4-phosphonooxybutanoate to phosphohydroxythreonine. The polypeptide is Phosphoserine aminotransferase (Blochmanniella floridana).